Reading from the N-terminus, the 325-residue chain is GTP 3',8-cyclase (325 aa).

The 216-residue stretch at 4-219 folds into the Radical SAM core domain; that stretch reads NYNRNINYLR…HGLQQKFGLL (216 aa). Arg13 is a GTP binding site. 2 residues coordinate [4Fe-4S] cluster: Cys20 and Cys24. Position 26 (Tyr26) interacts with S-adenosyl-L-methionine. Cys27 contributes to the [4Fe-4S] cluster binding site. Position 63 (Arg63) interacts with GTP. Gly67 is a binding site for S-adenosyl-L-methionine. Thr94 serves as a coordination point for GTP. Ser118 provides a ligand contact to S-adenosyl-L-methionine. Residue Lys155 participates in GTP binding. An S-adenosyl-L-methionine-binding site is contributed by Met189. Positions 254 and 257 each coordinate [4Fe-4S] cluster. Residue 259–261 coordinates GTP; the sequence is RLR. Position 271 (Cys271) interacts with [4Fe-4S] cluster.

This sequence belongs to the radical SAM superfamily. MoaA family. In terms of assembly, monomer and homodimer. Requires [4Fe-4S] cluster as cofactor.

The enzyme catalyses GTP + AH2 + S-adenosyl-L-methionine = (8S)-3',8-cyclo-7,8-dihydroguanosine 5'-triphosphate + 5'-deoxyadenosine + L-methionine + A + H(+). It functions in the pathway cofactor biosynthesis; molybdopterin biosynthesis. In terms of biological role, catalyzes the cyclization of GTP to (8S)-3',8-cyclo-7,8-dihydroguanosine 5'-triphosphate. In Desulforamulus reducens (strain ATCC BAA-1160 / DSM 100696 / MI-1) (Desulfotomaculum reducens), this protein is GTP 3',8-cyclase.